The primary structure comprises 408 residues: Protein EcsB (408 aa).

The next 9 membrane-spanning stretches (helical) occupy residues histidine 30–isoleucine 50, isoleucine 53–serine 73, leucine 111–glycine 131, leucine 134–methionine 154, leucine 180–methionine 200, tyrosine 284–alanine 304, isoleucine 308–phenylalanine 328, tyrosine 351–alanine 371, and alanine 374–leucine 394.

It localises to the cell membrane. Presumed to form part of an ABC-transporter, it may form a transport channel. In Bacillus subtilis (strain 168), this protein is Protein EcsB (ecsB).